The sequence spans 284 residues: L-ribulose-5-phosphate 3-epimerase UlaE (284 aa).

It belongs to the L-ribulose-5-phosphate 3-epimerase family.

It catalyses the reaction L-ribulose 5-phosphate = L-xylulose 5-phosphate. It functions in the pathway cofactor degradation; L-ascorbate degradation; D-xylulose 5-phosphate from L-ascorbate: step 3/4. Its function is as follows. Catalyzes the isomerization of L-xylulose-5-phosphate to L-ribulose-5-phosphate. Is involved in the anaerobic L-ascorbate utilization. The protein is L-ribulose-5-phosphate 3-epimerase UlaE of Escherichia coli O17:K52:H18 (strain UMN026 / ExPEC).